A 283-amino-acid chain; its full sequence is Undecaprenyl-diphosphatase (283 aa).

7 helical membrane passes run Pro-46 to Phe-66, Val-95 to Trp-115, Val-127 to Met-147, Leu-154 to Ile-174, Phe-200 to Ala-220, Ala-227 to Ile-247, and Thr-259 to Phe-279.

It belongs to the UppP family.

Its subcellular location is the cell inner membrane. The enzyme catalyses di-trans,octa-cis-undecaprenyl diphosphate + H2O = di-trans,octa-cis-undecaprenyl phosphate + phosphate + H(+). Functionally, catalyzes the dephosphorylation of undecaprenyl diphosphate (UPP). Confers resistance to bacitracin. This is Undecaprenyl-diphosphatase from Synechococcus sp. (strain CC9902).